The primary structure comprises 122 residues: Urease subunit beta (122 aa).

Belongs to the urease beta subunit family. Heterotrimer of UreA (gamma), UreB (beta) and UreC (alpha) subunits. Three heterotrimers associate to form the active enzyme.

The protein resides in the cytoplasm. It catalyses the reaction urea + 2 H2O + H(+) = hydrogencarbonate + 2 NH4(+). Its pathway is nitrogen metabolism; urea degradation; CO(2) and NH(3) from urea (urease route): step 1/1. This Flavobacterium johnsoniae (strain ATCC 17061 / DSM 2064 / JCM 8514 / BCRC 14874 / CCUG 350202 / NBRC 14942 / NCIMB 11054 / UW101) (Cytophaga johnsonae) protein is Urease subunit beta.